A 129-amino-acid chain; its full sequence is Iron-sulfur cluster assembly 1 homolog, mitochondrial (129 aa).

Residues 1–12 constitute a mitochondrion transit peptide; that stretch reads MSASLVRATVRA. Residues C57, C121, and C123 each coordinate Fe cation.

It belongs to the HesB/IscA family. As to quaternary structure, interacts with CRY2, but not with CRY1 (in vitro).

Its subcellular location is the mitochondrion. Functionally, involved in the maturation of mitochondrial 4Fe-4S proteins functioning late in the iron-sulfur cluster assembly pathway. Probably involved in the binding of an intermediate of Fe/S cluster assembly. This Rattus norvegicus (Rat) protein is Iron-sulfur cluster assembly 1 homolog, mitochondrial (Isca1).